A 460-amino-acid chain; its full sequence is Elongation factor 1-alpha (460 aa).

Position 2 is a n,N,N-trimethylglycine (Gly2). Position 3 is an N6,N6-dimethyllysine; alternate (Lys3). Lys3 carries the post-translational modification N6-methyllysine; alternate. The region spanning Lys5–Ser240 is the tr-type G domain. The G1 stretch occupies residues Gly14–Ser21. Gly14 to Ser21 provides a ligand contact to GTP. Lys30 bears the N6-methyllysine mark. A G2 region spans residues Gly70–Asp74. Lys79 is subject to N6,N6,N6-trimethyllysine. The interval Asp91–Gly94 is G3. Residues Asp91–His95 and Asn153–Asp156 each bind GTP. Positions Asn153–Asp156 are G4. The tract at residues Ser192–Trp194 is G5. Residue Lys317 is modified to N6,N6-dimethyllysine; alternate. Lys317 carries the post-translational modification N6-methyllysine; alternate. N6-methyllysine is present on Lys391.

It belongs to the TRAFAC class translation factor GTPase superfamily. Classic translation factor GTPase family. EF-Tu/EF-1A subfamily.

The protein resides in the cytoplasm. Functionally, this protein promotes the GTP-dependent binding of aminoacyl-tRNA to the A-site of ribosomes during protein biosynthesis. The sequence is that of Elongation factor 1-alpha (TEF) from Yarrowia lipolytica (strain CLIB 122 / E 150) (Yeast).